The following is a 49-amino-acid chain: uncharacterized protein (49 aa).

The protein belongs to the metallo-dependent hydrolases superfamily. TatD-type hydrolase family. A divalent metal cation serves as cofactor.

This is an uncharacterized protein from Geobacillus stearothermophilus (Bacillus stearothermophilus).